Here is a 191-residue protein sequence, read N- to C-terminus: Protein GrpE (191 aa).

Positions 1–15 (MGKEEKNNIEDKALD) are enriched in basic and acidic residues. The segment at 1–35 (MGKEEKNNIEDKALDNEQEMDQESTSKAVEELSIE) is disordered.

It belongs to the GrpE family. In terms of assembly, homodimer.

It localises to the cytoplasm. Participates actively in the response to hyperosmotic and heat shock by preventing the aggregation of stress-denatured proteins, in association with DnaK and GrpE. It is the nucleotide exchange factor for DnaK and may function as a thermosensor. Unfolded proteins bind initially to DnaJ; upon interaction with the DnaJ-bound protein, DnaK hydrolyzes its bound ATP, resulting in the formation of a stable complex. GrpE releases ADP from DnaK; ATP binding to DnaK triggers the release of the substrate protein, thus completing the reaction cycle. Several rounds of ATP-dependent interactions between DnaJ, DnaK and GrpE are required for fully efficient folding. The chain is Protein GrpE from Francisella philomiragia subsp. philomiragia (strain ATCC 25017 / CCUG 19701 / FSC 153 / O#319-036).